A 1481-amino-acid chain; its full sequence is Cystic fibrosis transmembrane conductance regulator (1481 aa).

The Cytoplasmic portion of the chain corresponds to 1 to 77 (MQRSPLEKAS…KLINALRRCF (77 aa)). A helical transmembrane segment spans residues 78 to 98 (FWRFMFYGIILYLGEVTKAVQ). The ABC transmembrane type-1 1 domain maps to 81 to 365 (FMFYGIILYL…WAVQTWYDSL (285 aa)). Over 99–122 (PLLLGRIIASYDPDNKVERSIAIY) the chain is Extracellular. The helical transmembrane segment at 123-146 (LGIGLCLLFIVRTLLLHPAIFGLH) threads the bilayer. The Cytoplasmic portion of the chain corresponds to 147-195 (HIGMQMRIAMFSLIYKKTLKLSSRVLDKISIGQLVSLLSNNLNKFDEGL). Residues 196 to 216 (ALAHFVWIAPLQVTLLMGLLW) form a helical membrane-spanning segment. Over 217–222 (ELLQAF) the chain is Extracellular. Residues 223 to 243 (TFCGLAFLVVLAFLQAGLGKM) traverse the membrane as a helical segment. Over 244–298 (MMKYRDQRAGKINERLVITSEIIENIQSVKAYCWEEAMEKIIENLRQTELKLTRK) the chain is Cytoplasmic. A helical transmembrane segment spans residues 299-319 (AAYVRYLNSSAFFFSGFFVVF). The Extracellular portion of the chain corresponds to 320-339 (LSVLPYALLKGIILRKIFTT). The chain crosses the membrane as a helical span at residues 340-358 (ISFCIVLRMAVTRQFPWAV). Over 359–858 (QTWYDSLGAI…YLRYITVHKS (500 aa)) the chain is Cytoplasmic. ATP is bound by residues tryptophan 401, 457–464 (GSTGAGKT), and glutamine 492. The region spanning 423–645 (NGDNNLFFSN…RPDFSSKLMG (223 aa)) is the ABC transporter 1 domain. The S-palmitoyl cysteine moiety is linked to residue cysteine 523. A phosphoserine mark is found at serine 548 and serine 659. A disordered R region region spans residues 653 to 831 (TAERRNSIIT…EEINEEDLRD (179 aa)). Phosphoserine; by PKA is present on serine 669. Serine 685 is subject to Phosphoserine. A Glycyl lysine isopeptide (Lys-Gly) (interchain with G-Cter in ubiquitin) cross-link involves residue lysine 687. A phosphoserine mark is found at serine 699 and serine 711. Threonine 716 carries the phosphothreonine modification. 5 positions are modified to phosphoserine: serine 736, serine 767, serine 790, serine 795, and serine 813. The helical transmembrane segment at 859–879 (LMFVLIWCLVVFLAEVAASLV) threads the bilayer. The ABC transmembrane type-1 2 domain occupies 859-1155 (LMFVLIWCLV…AVNSSIDVDS (297 aa)). Residues 880–918 (VLCLFPKILFQDKGNSTKSANNSYAVIITSTSSYYIFYI) lie on the Extracellular side of the membrane. N-linked (GlcNAc...) asparagine glycosylation is found at asparagine 894 and asparagine 900. The discontinuously helical transmembrane segment at 919 to 939 (YVGVADTLLALGLFRGLPLVH) threads the bilayer. Topologically, residues 940 to 990 (TLITVSKTLHHKMLQSVLQAPMSTLNTLKTGGILNRFSKDIAVLDDLLPLT) are cytoplasmic. A helical transmembrane segment spans residues 991-1011 (IFDFVQLLLIVIGAVVVVSVL). Over 1012 to 1013 (QP) the chain is Extracellular. A helical transmembrane segment spans residues 1014-1034 (YIFLATVPVIAAFILLRAYFL). Residues 1035–1095 (HTSQQLKQLE…TANWFLYLST (61 aa)) lie on the Cytoplasmic side of the membrane. A helical membrane pass occupies residues 1096–1116 (LRWFQMRIEMIFVIFFIAVTF). Residues 1117 to 1130 (ISILTTGEGEGRVG) lie on the Extracellular side of the membrane. A helical membrane pass occupies residues 1131–1151 (IILTLAMNIMGTLQWAVNSSI). Residues 1152–1481 (DVDSLMRSVS…TEEEVQETKL (330 aa)) lie on the Cytoplasmic side of the membrane. The ABC transporter 2 domain maps to 1211-1444 (MTVKDLTAKY…KSLFRQAISP (234 aa)). Residues tyrosine 1220 and 1245–1252 (GRTGSGKS) each bind ATP. The segment at 1387-1481 (RTLKQAFADC…TEEEVQETKL (95 aa)) is interaction with GORASP2. The S-palmitoyl cysteine moiety is linked to residue cysteine 1396. The disordered stretch occupies residues 1452 to 1481 (PQRNSSRQKSRSNIAALKEETEEEVQETKL). Low complexity predominate over residues 1453-1464 (QRNSSRQKSRSN). Serine 1457 bears the Phosphoserine mark. Over residues 1471-1481 (ETEEEVQETKL) the composition is skewed to acidic residues. Residues 1479–1481 (TKL) carry the PDZ-binding motif.

This sequence belongs to the ABC transporter superfamily. ABCC family. CFTR transporter (TC 3.A.1.202) subfamily. In terms of assembly, monomer; does not require oligomerization for channel activity. May form oligomers in the membrane. Interacts with SLC26A3, SLC26A6 and NHERF1. Interacts with SHANK2. Interacts with MYO6. Interacts (via C-terminus) with GOPC (via PDZ domain); this promotes CFTR internalization and thereby decreases channel activity. Interacts with SLC4A7 through NHERF1. Found in a complex with MYO5B and RAB11A. Interacts with ANO1. Interacts with SLC26A8. Interacts with AHCYL1; the interaction increases CFTR activity. Interacts with CSE1L. The core-glycosylated form interacts with GORASP2 (via PDZ GRASP-type 1 domain) in respone to ER stress. Interacts with MARCHF2; the interaction leads to CFTR ubiqtuitination and degradation. Interacts with ADGRG2. In terms of processing, N-glycosylated. Post-translationally, phosphorylated; cAMP treatment promotes phosphorylation and activates the channel. Dephosphorylation decreases the ATPase activity (in vitro). Phosphorylation at PKA sites activates the channel. Phosphorylation at PKC sites enhances the response to phosphorylation by PKA. Phosphorylated by AMPK; this inhibits channel activity. Ubiquitinated, leading to its degradation in the lysosome. Deubiquitination by USP10 in early endosomes enhances its endocytic recycling to the cell membrane. Ubiquitinated by RNF185 during ER stress. Ubiquitinated by MARCHF2.

Its subcellular location is the apical cell membrane. It localises to the early endosome membrane. The protein localises to the cell membrane. The protein resides in the recycling endosome membrane. It is found in the endoplasmic reticulum membrane. Its subcellular location is the nucleus. The enzyme catalyses ATP + H2O + closed Cl(-) channel = ADP + phosphate + open Cl(-) channel.. The catalysed reaction is chloride(in) = chloride(out). It carries out the reaction hydrogencarbonate(in) = hydrogencarbonate(out). It catalyses the reaction ATP + H2O = ADP + phosphate + H(+). Its function is as follows. Epithelial ion channel that plays an important role in the regulation of epithelial ion and water transport and fluid homeostasis. Mediates the transport of chloride ions across the cell membrane. Possesses an intrinsic ATPase activity and utilizes ATP to gate its channel; the passive flow of anions through the channel is gated by cycles of ATP binding and hydrolysis by the ATP-binding domains. The ion channel is also permeable to HCO(3)(-); selectivity depends on the extracellular chloride concentration. Exerts its function also by modulating the activity of other ion channels and transporters. Contributes to the regulation of the pH and the ion content of the epithelial fluid layer. Modulates the activity of the epithelial sodium channel (ENaC) complex, in part by regulating the cell surface expression of the ENaC complex. May regulate bicarbonate secretion and salvage in epithelial cells by regulating the transporter SLC4A7. Can inhibit the chloride channel activity of ANO1. Plays a role in the chloride and bicarbonate homeostasis during sperm epididymal maturation and capacitation. This chain is Cystic fibrosis transmembrane conductance regulator, found in Muntiacus muntjak (Barking deer).